The following is a 353-amino-acid chain: Cyclin-dependent kinase-like 1 (353 aa).

The region spanning 4–286 is the Protein kinase domain; the sequence is YDRLSKLGEG…CSELMLHGIF (283 aa). ATP is bound by residues 10–18 and lysine 33; that span reads LGEGSYGVV. Aspartate 126 functions as the Proton acceptor in the catalytic mechanism. The disordered stretch occupies residues 331–353; it reads GGNHGNNNNNGNGINRNFLPTIS. Low complexity predominate over residues 335–347; that stretch reads GNNNNNGNGINRN.

This sequence belongs to the protein kinase superfamily. Ser/Thr protein kinase family. Specifically expressed in head and tail ciliated sensory neurons.

The protein resides in the cell projection. It localises to the cilium. It catalyses the reaction L-seryl-[protein] + ATP = O-phospho-L-seryl-[protein] + ADP + H(+). The catalysed reaction is L-threonyl-[protein] + ATP = O-phospho-L-threonyl-[protein] + ADP + H(+). Its function is as follows. Modulates cilium assembly. In Caenorhabditis elegans, this protein is Cyclin-dependent kinase-like 1.